The primary structure comprises 382 residues: F-box protein At3g27290 (382 aa).

The region spanning 16-105 is the F-box domain; sequence RKLELGLGEF…VDQMLFETLS (90 aa).

This chain is F-box protein At3g27290, found in Arabidopsis thaliana (Mouse-ear cress).